Here is an 860-residue protein sequence, read N- to C-terminus: Alanine--tRNA ligase (860 aa).

Zn(2+)-binding residues include H553, H557, C655, and H659.

This sequence belongs to the class-II aminoacyl-tRNA synthetase family. The cofactor is Zn(2+).

The protein localises to the cytoplasm. It carries out the reaction tRNA(Ala) + L-alanine + ATP = L-alanyl-tRNA(Ala) + AMP + diphosphate. In terms of biological role, catalyzes the attachment of alanine to tRNA(Ala) in a two-step reaction: alanine is first activated by ATP to form Ala-AMP and then transferred to the acceptor end of tRNA(Ala). Also edits incorrectly charged Ser-tRNA(Ala) and Gly-tRNA(Ala) via its editing domain. The chain is Alanine--tRNA ligase from Legionella pneumophila (strain Paris).